The following is a 576-amino-acid chain: Non-neuronal cytoplasmic intermediate filament protein (576 aa).

The disordered stretch occupies residues 1–51 (MTSKISTTYEEEGRQSKIQPRAFVITRSGPSSKSSSFSARQSYASSRQSIT). Positions 2–75 (TSKISTTYEE…FRGTREKEKR (74 aa)) are head. Residues 28–49 (SGPSSKSSSFSARQSYASSRQS) show a composition bias toward low complexity. The region spanning 73-425 (EKREMQNLNE…KLLEGEESRV (353 aa)) is the IF rod domain. The interval 76–108 (EMQNLNERLASYIEKVHFLDAQVKKLEAENEAL) is coil 1A. Positions 109 to 122 (RNRKSESLQPIRDA) are linker 1. The interval 123–260 (YENELAQARK…DLLDQLELLK (138 aa)) is coil 1B. Positions 261-278 (PEPIQIKGMDYAEFWKSE) are linker 2. Residues 279–425 (LSKCVREIQS…KLLEGEESRV (147 aa)) are coil 2. The tail stretch occupies residues 426–576 (GLRSLVEQAI…KATLIAKFSG (151 aa)). The LTD domain maps to 456–574 (GSMTIQRSSK…NEKATLIAKF (119 aa)).

It belongs to the intermediate filament family. In terms of assembly, can form homopolymers.

The protein resides in the cytoplasm. The chain is Non-neuronal cytoplasmic intermediate filament protein from Cornu aspersum (Brown garden snail).